Reading from the N-terminus, the 477-residue chain is Cytoplasmic 60S subunit biogenesis factor ZNF622 (477 aa).

A2 carries the post-translational modification N-acetylalanine. 2 U1-type zinc fingers span residues Y4–H28 and T67–H91. The tract at residues A135 to D212 is disordered. Residues G167–P178 are compositionally biased toward basic and acidic residues. The segment covering E196–D212 has biased composition (acidic residues). A Phosphoserine modification is found at S276.

The protein belongs to the REI1 family. As to quaternary structure, homo- and heterodimer. Associates with pre-60S ribosomal particles. Interacts with MELK and MYBL2. Interacts with DNAJC21. In terms of processing, phosphorylated by MELK. The phosphorylation may redirect the protein to the nucleus. Post-translationally, ubiquitinated by HECTD1, leading to its degradation. In terms of tissue distribution, expressed in lung, kidney, spleen, liver and brain with lowest expression in kidney.

The protein resides in the cytoplasm. Its subcellular location is the nucleus. Pre-60S-associated cytoplasmic factor involved in the cytoplasmic maturation of the 60S subunit. The polypeptide is Cytoplasmic 60S subunit biogenesis factor ZNF622 (Homo sapiens (Human)).